We begin with the raw amino-acid sequence, 282 residues long: NADPH-dependent 7-cyano-7-deazaguanine reductase (282 aa).

88 to 90 (IES) is a binding site for substrate. 90–91 (SK) contributes to the NADPH binding site. Cysteine 190 serves as the catalytic Thioimide intermediate. Aspartate 197 (proton donor) is an active-site residue. Residue 229–230 (HE) participates in substrate binding. 258 to 259 (RG) contacts NADPH.

The protein belongs to the GTP cyclohydrolase I family. QueF type 2 subfamily. Homodimer.

It is found in the cytoplasm. The catalysed reaction is 7-aminomethyl-7-carbaguanine + 2 NADP(+) = 7-cyano-7-deazaguanine + 2 NADPH + 3 H(+). The protein operates within tRNA modification; tRNA-queuosine biosynthesis. Functionally, catalyzes the NADPH-dependent reduction of 7-cyano-7-deazaguanine (preQ0) to 7-aminomethyl-7-deazaguanine (preQ1). In Citrobacter koseri (strain ATCC BAA-895 / CDC 4225-83 / SGSC4696), this protein is NADPH-dependent 7-cyano-7-deazaguanine reductase.